The primary structure comprises 764 residues: Probable glutamate--tRNA ligase, cytoplasmic (764 aa).

228–230 (RFP) is an L-glutamate binding site. The short motif at 233–242 (PSGYMHIGHC) is the 'HIGH' region element. ATP is bound at residue His238. L-glutamate is bound by residues Asp264, 404-408 (YDFAC), and Arg422. Residues Glu425 and 460–464 (LLSKR) contribute to the ATP site. Residues 460-464 (LLSKR) carry the 'KMSKS' region motif.

The protein belongs to the class-I aminoacyl-tRNA synthetase family. Glutamate--tRNA ligase type 2 subfamily.

The protein resides in the cytoplasm. It catalyses the reaction tRNA(Glu) + L-glutamate + ATP = L-glutamyl-tRNA(Glu) + AMP + diphosphate. Functionally, catalyzes the attachment of glutamate to tRNA(Glu) in a two-step reaction: glutamate is first activated by ATP to form Glu-AMP and then transferred to the acceptor end of tRNA(Glu). In Dictyostelium discoideum (Social amoeba), this protein is Probable glutamate--tRNA ligase, cytoplasmic (gluS).